The sequence spans 522 residues: Tryptophan 2-halogenase (522 aa).

Positions 17, 36, 42, 44, 45, 48, 103, 127, and 296 each coordinate FAD. Chloride contacts are provided by S307 and G308. V309 is an FAD binding site.

This sequence belongs to the flavin-dependent halogenase family.

Involved in the incorporation of a chlorinated tryptophan residue into halogenated forms of the secondary metabolites called chondramides. This Chondromyces crocatus protein is Tryptophan 2-halogenase.